Consider the following 874-residue polypeptide: Mannuronan C5-epimerase AlgE6 (874 aa).

PbH1 repeat units follow at residues 133–155, 157–179, 180–202, 204–226, 234–256, 257–279, 280–302, and 320–351; these read DRNV…DPHE, TINL…VADY, QIGG…NIVT, TNDF…VVQR, PENI…LVKM, SNNV…RVYG, AQGV…APEV, and TLNT…DFSS. 7 Hemolysin-type calcium-binding repeats span residues 383–394, 401–417, 419–435, 562–578, 580–596, 723–739, and 741–757; these read GTDGNDVLIGSD, GGAG…DDLL, GGAG…ADTF, GGGG…GDLL, and GGGG…NDLL. Residues 401–420 form a disordered region; that stretch reads GGAGDDRLDGGAGDDLLDGG.

The protein belongs to the D-mannuronate C5-epimerase family. It depends on Ca(2+) as a cofactor.

It is found in the secreted. It catalyses the reaction [(1-&gt;4)-beta-D-mannuronosyl](n) = [alginate](n). It functions in the pathway glycan biosynthesis; alginate biosynthesis. Its activity is regulated as follows. Inhibited by zinc. Its function is as follows. Converts beta-D-mannuronic acid (M) to alpha-L-guluronic acid (G), producing a polymer with gel-forming capacity, required for the formation of the cyst coat. This Azotobacter vinelandii protein is Mannuronan C5-epimerase AlgE6.